The primary structure comprises 555 residues: CTP synthase (555 aa).

The segment at 1 to 277 (MPKEPETEYD…DQHVMERLNV (277 aa)) is amidoligase domain. Ser-26 contacts CTP. Residue Ser-26 participates in UTP binding. Position 27–32 (27–32 (GLGKGI)) interacts with ATP. Tyr-67 serves as a coordination point for L-glutamine. Asp-84 contributes to the ATP binding site. Residues Asp-84 and Glu-152 each contribute to the Mg(2+) site. Residues 159–161 (DIE), 198–203 (KTKPTQ), and Lys-234 each bind CTP. UTP-binding positions include 198 to 203 (KTKPTQ) and Lys-234. Residues 307–542 (LVGKYDLEDA…LKSVDSTLDA (236 aa)) enclose the Glutamine amidotransferase type-1 domain. L-glutamine is bound at residue Gly-364. Cys-391 (nucleophile; for glutamine hydrolysis) is an active-site residue. Residues 392–395 (LGFQ), Glu-415, and Arg-472 contribute to the L-glutamine site. Active-site residues include His-515 and Glu-517.

This sequence belongs to the CTP synthase family. In terms of assembly, homotetramer.

It catalyses the reaction UTP + L-glutamine + ATP + H2O = CTP + L-glutamate + ADP + phosphate + 2 H(+). The enzyme catalyses L-glutamine + H2O = L-glutamate + NH4(+). The catalysed reaction is UTP + NH4(+) + ATP = CTP + ADP + phosphate + 2 H(+). The protein operates within pyrimidine metabolism; CTP biosynthesis via de novo pathway; CTP from UDP: step 2/2. Its activity is regulated as follows. Allosterically activated by GTP, when glutamine is the substrate; GTP has no effect on the reaction when ammonia is the substrate. The allosteric effector GTP functions by stabilizing the protein conformation that binds the tetrahedral intermediate(s) formed during glutamine hydrolysis. Inhibited by the product CTP, via allosteric rather than competitive inhibition. Functionally, catalyzes the ATP-dependent amination of UTP to CTP with either L-glutamine or ammonia as the source of nitrogen. Regulates intracellular CTP levels through interactions with the four ribonucleotide triphosphates. The sequence is that of CTP synthase from Haloquadratum walsbyi (strain DSM 16790 / HBSQ001).